A 363-amino-acid polypeptide reads, in one-letter code: MQTPTLGQLATENGAQVVGDPDLAITGLAPLDQAGPGELSFLSNPLYLQQALDAKAGAVIVSAADLERVRAEGKADGRNWLVARNPYVCFARVAQRFDRAANTDARTGIDARATVAPDAVVPASCYIGPNVVIEAGARLGERVRILANGYVGAHAQIGDDALLYANVSVYHHCVVGARAILHSGVVIGADGFGFAPDISASGVEYVKIPQTGRAVLGDDVEVGANTAIDRGAMADTVIEDGCKIDNQVQIAHNVRVGAHTVIAGCAAVSGSTRIGRFCVIGGAANFAGHLTIADRTTVSGGTSITKSITKPGGHFTSVFPFLPHGEWERNAAIVRGLSKLRERVVALERRLRGQAAGSQPSQD.

His-252 (proton acceptor) is an active-site residue.

Belongs to the transferase hexapeptide repeat family. LpxD subfamily. Homotrimer.

It catalyses the reaction a UDP-3-O-[(3R)-3-hydroxyacyl]-alpha-D-glucosamine + a (3R)-hydroxyacyl-[ACP] = a UDP-2-N,3-O-bis[(3R)-3-hydroxyacyl]-alpha-D-glucosamine + holo-[ACP] + H(+). It participates in bacterial outer membrane biogenesis; LPS lipid A biosynthesis. Functionally, catalyzes the N-acylation of UDP-3-O-acylglucosamine using 3-hydroxyacyl-ACP as the acyl donor. Is involved in the biosynthesis of lipid A, a phosphorylated glycolipid that anchors the lipopolysaccharide to the outer membrane of the cell. In Cupriavidus taiwanensis (strain DSM 17343 / BCRC 17206 / CCUG 44338 / CIP 107171 / LMG 19424 / R1) (Ralstonia taiwanensis (strain LMG 19424)), this protein is UDP-3-O-acylglucosamine N-acyltransferase.